A 450-amino-acid chain; its full sequence is FAD-linked oxidoreductase ptmO (450 aa).

The region spanning 32–203 (PPELPYAIVR…TRFFIRTRPA (172 aa)) is the FAD-binding PCMH-type domain.

It belongs to the oxygen-dependent FAD-linked oxidoreductase family. It depends on FAD as a cofactor.

Its pathway is secondary metabolite biosynthesis. FAD-linked oxidoreductase; part of the gene cluster that mediates the biosynthesis of the indole diterpenes penitrems. The geranylgeranyl diphosphate (GGPP) synthase ptmG catalyzes the first step in penitrem biosynthesis via conversion of farnesyl pyrophosphate and isopentyl pyrophosphate into geranylgeranyl pyrophosphate (GGPP). Condensation of indole-3-glycerol phosphate with GGPP by the prenyl transferase ptmC then forms 3-geranylgeranylindole (3-GGI). Epoxidation by the FAD-dependent monooxygenase ptmM leads to a epoxidized-GGI that is substrate of the terpene cyclase ptmB for cyclization to yield paspaline. Paspaline is subsequently converted to 13-desoxypaxilline by the cytochrome P450 monooxygenase ptmP, the latter being then converted to paxilline by the cytochrome P450 monooxygenase ptmQ. Paxilline is converted to beta-paxitriol via C-10 ketoreduction by the short-chain dehydrogenase ptmH which can be monoprenylated at the C-20 by the indole diterpene prenyltransferase ptmD. A two-step elimination (acetylation and elimination) process performed by the O-acetyltransferase ptmV and ptmI leads to the production of the prenylated form of penijanthine. The FAD-linked oxidoreductase ptmO then converts the prenylated form of penijanthine into PC-M5 which is in turn transformed into PC-M4 by the aromatic dimethylallyltransferase ptmE. Five sequential oxidative transformations performed by the cytochrome P450 monooxygenases ptmK, ptmU, ptmL, ptmN and ptmJ yield the various penitrem compounds. PtmK, ptmU and ptmM are involved in the formation of the key bicyclic ring of penitrem C via the formation of the intermediates secopenitrem D and penitrem D. PtmL catalyzes the epoxidation of penitrem D and C to yield penitrem B and F, respectively. PtmJ catalyzes the last benzylic hydroxylation to convert penitrem B to prenitrem E and penitrem F to penitrem A. The polypeptide is FAD-linked oxidoreductase ptmO (Penicillium ochrochloron).